The sequence spans 164 residues: Diphosphoinositol polyphosphate phosphohydrolase 3-alpha (164 aa).

Residues Arg9, 17-19 (KKR), and 38-40 (SSR) each bind substrate. Residues 17 to 144 (KKRAACLCFR…VHAEYLEKLK (128 aa)) form the Nudix hydrolase domain. The Mg(2+) site is built by Gly49 and Glu65. Residues 50–71 (GGMEPEEEPDGAAVREVYEEAG) carry the Nudix box motif. The active-site Proton acceptor is the Glu68. Glu69 lines the Mg(2+) pocket. Residues 89–91 (RKH), Arg115, and Lys133 contribute to the substrate site. The tract at residues 144–164 (KLGGSPTNGNSAAPSPPESEP) is disordered.

The protein belongs to the Nudix hydrolase family. DIPP subfamily. Mg(2+) is required as a cofactor. Mn(2+) serves as cofactor. As to expression, mainly expressed in testis, liver kidney and, at lower level, in heart, brain, spleen, lung and skeletal muscle.

It is found in the cytoplasm. It carries out the reaction diphospho-myo-inositol polyphosphate + H2O = myo-inositol polyphosphate + phosphate.. The catalysed reaction is P(1),P(6)-bis(5'-adenosyl) hexaphosphate + H2O = adenosine 5'-pentaphosphate + AMP + 2 H(+). The enzyme catalyses P(1),P(5)-bis(5'-adenosyl) pentaphosphate + H2O = adenosine 5'-tetraphosphate + AMP + 2 H(+). Cleaves a beta-phosphate from the diphosphate groups in PP-InsP5 (diphosphoinositol pentakisphosphate), suggesting that it may play a role in signal transduction. Also able to catalyze the hydrolysis of dinucleoside oligophosphates, with Ap6A and Ap5A being the preferred substrates. The major reaction products are ADP and p4a from Ap6A and ADP and ATP from Ap5A. Also able to hydrolyze 5-phosphoribose 1-diphosphate; however, the relevance of such activity in vivo remains unclear. The sequence is that of Diphosphoinositol polyphosphate phosphohydrolase 3-alpha from Mus musculus (Mouse).